The primary structure comprises 389 residues: Flap endonuclease 1 (389 aa).

Residues 1-105 (MGIKGLTALL…GELAKRKDKR (105 aa)) form an N-domain region. Residue Asp-34 participates in Mg(2+) binding. Arg-71 serves as a coordination point for DNA. Residues Asp-87, Glu-159, Glu-161, Asp-180, and Asp-182 each contribute to the Mg(2+) site. Residues 123-254 (EVEKLSKRTV…KTALKLIKEH (132 aa)) form an I-domain region. Glu-159 provides a ligand contact to DNA. 2 residues coordinate DNA: Gly-232 and Asp-234. Residue Asp-234 participates in Mg(2+) binding. The interaction with PCNA stretch occupies residues 338 to 346 (SQNRLESFF). A disordered region spans residues 356 to 389 (IGKRKVEETKSGKGSKAGLNKKSKGVSGYKSKKT). A compositionally biased stretch (basic residues) spans 374-389 (LNKKSKGVSGYKSKKT).

Belongs to the XPG/RAD2 endonuclease family. FEN1 subfamily. As to quaternary structure, interacts with PCNA. Three molecules of FEN1 bind to one PCNA trimer with each molecule binding to one PCNA monomer. PCNA stimulates the nuclease activity without altering cleavage specificity. Mg(2+) is required as a cofactor. In terms of processing, phosphorylated. Phosphorylation upon DNA damage induces relocalization to the nuclear plasma.

It is found in the nucleus. Its subcellular location is the nucleolus. The protein resides in the nucleoplasm. It localises to the mitochondrion. Structure-specific nuclease with 5'-flap endonuclease and 5'-3' exonuclease activities involved in DNA replication and repair. During DNA replication, cleaves the 5'-overhanging flap structure that is generated by displacement synthesis when DNA polymerase encounters the 5'-end of a downstream Okazaki fragment. It enters the flap from the 5'-end and then tracks to cleave the flap base, leaving a nick for ligation. Also involved in the long patch base excision repair (LP-BER) pathway, by cleaving within the apurinic/apyrimidinic (AP) site-terminated flap. Acts as a genome stabilization factor that prevents flaps from equilibrating into structures that lead to duplications and deletions. Also possesses 5'-3' exonuclease activity on nicked or gapped double-stranded DNA, and exhibits RNase H activity. Also involved in replication and repair of rDNA and in repairing mitochondrial DNA. The polypeptide is Flap endonuclease 1 (Ostreococcus tauri).